Consider the following 219-residue polypeptide: Histone H1.4 (219 aa).

Low complexity predominate over residues 1 to 15 (MSETAPAAPAAPAPA). The segment at 1-41 (MSETAPAAPAAPAPAEKTPVKKKARKAAGGAKRKTSGPPVS) is disordered. The residue at position 2 (serine 2) is an N-acetylserine. Residue serine 2 is modified to Phosphoserine. Lysine 17 is modified (N6-acetyllysine). Phosphothreonine is present on threonine 18. A compositionally biased stretch (basic residues) spans 20-35 (VKKKARKAAGGAKRKT). An N6-acetyllysine; alternate modification is found at lysine 26. Lysine 26 bears the N6-methyllysine; alternate mark. The residue at position 34 (lysine 34) is an N6-(beta-hydroxybutyryl)lysine; alternate. N6-succinyllysine; alternate is present on lysine 34. Residue serine 36 is modified to Phosphoserine. The region spanning 36–109 (SGPPVSELIT…GASGSFKLNK (74 aa)) is the H15 domain. Lysine 52 carries the post-translational modification N6-(beta-hydroxybutyryl)lysine. Residue arginine 54 is modified to Citrulline. Residues lysine 64, lysine 85, lysine 90, and lysine 106 each carry the N6-(beta-hydroxybutyryl)lysine modification. The interval 92–219 (TLVQTKGTGA…KPKKTAAKKK (128 aa)) is disordered. A compositionally biased stretch (basic residues) spans 119 to 140 (KAKRAGAAKAKKPAGAAKKPKK). Threonine 146 is modified (phosphothreonine). Composition is skewed to basic residues over residues 149-160 (KSTKKTPKKAKK) and 168-185 (KKAKSPKKAKATKAKKAP). Serine 150 bears the ADP-ribosylserine mark. Serine 187 is modified (phosphoserine). Basic residues predominate over residues 192-219 (KTVKPKAAKPKTSKPKAAKPKKTAAKKK).

It belongs to the histone H1/H5 family. Citrullination at Arg-54 (H1R54ci) by PADI4 takes place within the DNA-binding site of H1 and results in its displacement from chromatin and global chromatin decondensation, thereby promoting pluripotency and stem cell maintenance. In terms of processing, ADP-ribosylated on Ser-55, Ser-113 and Ser-150 in response to DNA damage. Post-translationally, H1 histones are progressively phosphorylated during the cell cycle, becoming maximally phosphorylated during late G2 phase and M phase, and being dephosphorylated sharply thereafter. Acetylated at Lys-26. Deacetylated at Lys-26 by SIRT1. In terms of processing, hydroxybutyrylation of histones is induced by starvation.

It is found in the nucleus. The protein resides in the chromosome. Functionally, histone H1 protein binds to linker DNA between nucleosomes forming the macromolecular structure known as the chromatin fiber. Histones H1 are necessary for the condensation of nucleosome chains into higher-order structured fibers. Also acts as a regulator of individual gene transcription through chromatin remodeling, nucleosome spacing and DNA methylation. This Mus musculus (Mouse) protein is Histone H1.4.